The primary structure comprises 193 residues: Putative histone H2B type 2-C (193 aa).

Residues 1–12 (MPEPAKFAPAPK) show a composition bias toward low complexity. Residues 1-33 (MPEPAKFAPAPKKGSKKAVTKAQKKDGKKRKRS) form a disordered region. Proline 2 is subject to N-acetylproline. Lysine 6 carries the post-translational modification N6-(2-hydroxyisobutyryl)lysine; alternate. N6-(beta-hydroxybutyryl)lysine; alternate occurs at positions 6 and 12. Lysine 6, lysine 12, and lysine 13 each carry N6-acetyllysine; alternate. Position 6 is an N6-butyryllysine; alternate (lysine 6). An N6-crotonyllysine; alternate mark is found at lysine 6, lysine 12, and lysine 13. Residues lysine 6 and lysine 12 each carry the N6-lactoyllysine; alternate modification. Residue lysine 6 forms a Glycyl lysine isopeptide (Lys-Gly) (interchain with G-Cter in SUMO2); alternate linkage. Lysine 13 is modified (N6-(2-hydroxyisobutyryl)lysine; alternate). At serine 15 the chain carries Phosphoserine; by STK4/MST1. Residues lysine 16, lysine 17, lysine 21, and lysine 24 each carry the N6-acetyllysine; alternate modification. Lysine 16, lysine 17, lysine 21, and lysine 24 each carry N6-crotonyllysine; alternate. N6-lactoyllysine; alternate occurs at positions 16, 17, 21, and 24. N6-(beta-hydroxybutyryl)lysine; alternate is present on residues lysine 17 and lysine 21. The residue at position 17 (lysine 17) is an N6-glutaryllysine; alternate. N6-(2-hydroxyisobutyryl)lysine; alternate occurs at positions 21 and 24. N6-butyryllysine; alternate is present on lysine 21. A Glycyl lysine isopeptide (Lys-Gly) (interchain with G-Cter in SUMO2); alternate cross-link involves residue lysine 21. Lysine 25 carries the N6-(2-hydroxyisobutyryl)lysine modification. At lysine 35 the chain carries N6-(2-hydroxyisobutyryl)lysine; alternate. Lysine 35 carries the post-translational modification N6-(beta-hydroxybutyryl)lysine; alternate. Residue lysine 35 is modified to N6-crotonyllysine; alternate. An N6-glutaryllysine; alternate modification is found at lysine 35. Lysine 35 is subject to N6-succinyllysine; alternate. A Glycyl lysine isopeptide (Lys-Gly) (interchain with G-Cter in ubiquitin); alternate cross-link involves residue lysine 35. Position 37 is a phosphoserine; by AMPK (serine 37). An N6-(2-hydroxyisobutyryl)lysine; alternate mark is found at lysine 44, lysine 47, and lysine 58. Lysine 44 carries the N6-lactoyllysine; alternate modification. 2 positions are modified to N6-glutaryllysine; alternate: lysine 44 and lysine 47. Lysine 47 carries the post-translational modification N6-methyllysine; alternate. Lysine 58 bears the N6,N6-dimethyllysine; alternate mark. Position 80 is a dimethylated arginine (arginine 80). At lysine 86 the chain carries N6-(2-hydroxyisobutyryl)lysine; alternate. An N6-(beta-hydroxybutyryl)lysine; alternate modification is found at lysine 86. Lysine 86 carries the N6-acetyllysine; alternate modification. At lysine 86 the chain carries N6-lactoyllysine; alternate. Lysine 86 is subject to N6,N6,N6-trimethyllysine; alternate. 2 positions are modified to omega-N-methylarginine: arginine 87 and arginine 93. The disordered stretch occupies residues 111–136 (PCPRAPRRSPSTPAPSESLPGPGARS).

Belongs to the histone H2B family. As to quaternary structure, the nucleosome is a histone octamer containing two molecules each of H2A, H2B, H3 and H4 assembled in one H3-H4 heterotetramer and two H2A-H2B heterodimers. The octamer wraps approximately 147 bp of DNA. In terms of processing, phosphorylation at Ser-37 (H2BS36ph) by AMPK in response to stress promotes transcription. Phosphorylated on Ser-15 (H2BS14ph) by STK4/MST1 during apoptosis; which facilitates apoptotic chromatin condensation. Also phosphorylated on Ser-15 in response to DNA double strand breaks (DSBs), and in correlation with somatic hypermutation and immunoglobulin class-switch recombination. Crotonylation (Kcr) is specifically present in male germ cells and marks testis-specific genes in post-meiotic cells, including X-linked genes that escape sex chromosome inactivation in haploid cells. Crotonylation marks active promoters and enhancers and confers resistance to transcriptional repressors. It is also associated with post-meiotically activated genes on autosomes. Post-translationally, lactylated in macrophages by EP300/P300 by using lactoyl-CoA directly derived from endogenous or exogenous lactate, leading to stimulates gene transcription.

It localises to the nucleus. The protein localises to the chromosome. Its function is as follows. Core component of nucleosome. Nucleosomes wrap and compact DNA into chromatin, limiting DNA accessibility to the cellular machineries which require DNA as a template. Histones thereby play a central role in transcription regulation, DNA repair, DNA replication and chromosomal stability. DNA accessibility is regulated via a complex set of post-translational modifications of histones, also called histone code, and nucleosome remodeling. This Homo sapiens (Human) protein is Putative histone H2B type 2-C.